We begin with the raw amino-acid sequence, 733 residues long: EF-hand domain-containing family member C2 (733 aa).

DM10 domains follow at residues 61–168 (DKQV…TKIG), 212–354 (DRKV…RTKY), and 416–523 (ISNT…ERNS).

As to quaternary structure, microtubule inner protein component of sperm flagellar doublet microtubules. Expressed in trachea multiciliated cells.

It is found in the cytoplasm. It localises to the cytoskeleton. The protein localises to the cilium axoneme. Its subcellular location is the flagellum axoneme. Functionally, microtubule inner protein (MIP) part of the dynein-decorated doublet microtubules (DMTs) in cilia axoneme, which is required for motile cilia beating. The chain is EF-hand domain-containing family member C2 (EFHC2) from Bos taurus (Bovine).